A 490-amino-acid polypeptide reads, in one-letter code: UDP-N-acetylmuramate--L-alanine ligase (490 aa).

Gly126–Thr132 provides a ligand contact to ATP.

It belongs to the MurCDEF family.

It localises to the cytoplasm. It catalyses the reaction UDP-N-acetyl-alpha-D-muramate + L-alanine + ATP = UDP-N-acetyl-alpha-D-muramoyl-L-alanine + ADP + phosphate + H(+). It participates in cell wall biogenesis; peptidoglycan biosynthesis. Its function is as follows. Cell wall formation. This Sodalis glossinidius (strain morsitans) protein is UDP-N-acetylmuramate--L-alanine ligase.